A 295-amino-acid polypeptide reads, in one-letter code: Inositol monophosphatase 1 (295 aa).

Residues Glu-73, Asp-92, Ile-94, Asp-95, and Asp-231 each contribute to the Mg(2+) site. Glu-73 contributes to the substrate binding site. Substrate-binding positions include 94 to 97 (IDGT) and Asp-231.

This sequence belongs to the inositol monophosphatase superfamily. The cofactor is Mg(2+).

It is found in the cytoplasm. The protein localises to the nucleus. The catalysed reaction is a myo-inositol phosphate + H2O = myo-inositol + phosphate. The protein operates within polyol metabolism; myo-inositol biosynthesis; myo-inositol from D-glucose 6-phosphate: step 2/2. With respect to regulation, inhibited by Li(+) and Na(+). Its function is as follows. Responsible for the provision of inositol required for synthesis of phosphatidylinositol and polyphosphoinositides. The chain is Inositol monophosphatase 1 (INM1) from Saccharomyces cerevisiae (strain ATCC 204508 / S288c) (Baker's yeast).